Here is a 2059-residue protein sequence, read N- to C-terminus: Large tegument protein deneddylase (2059 aa).

The tract at residues 1–230 (MRIIAGSTNQ…PDIALSLNDF (230 aa)) is deubiquitination activity. The Peptidase C76 domain maps to 3-220 (IIAGSTNQND…TILILKTYKD (218 aa)). Residues Cys-23, Asp-155, and His-157 contribute to the active site. A disordered region spans residues 245 to 272 (TNTLISKQSPSKRKQEKTSLNSNSLEKK). Position 278 (Ser-278) is a region of interest, interaction with inner tegument protein.

It belongs to the herpesviridae large tegument protein family. In terms of assembly, interacts with host CUL1 and CUL4A; these interactions inhibit the E3 ligase activity of cullins. Interacts with inner tegument protein. Interacts with capsid vertex specific component CVC2. Interacts with the major capsid protein/MCP.

It localises to the virion tegument. The protein localises to the host cytoplasm. Its subcellular location is the host nucleus. The enzyme catalyses Thiol-dependent hydrolysis of ester, thioester, amide, peptide and isopeptide bonds formed by the C-terminal Gly of ubiquitin (a 76-residue protein attached to proteins as an intracellular targeting signal).. Functionally, large tegument protein that plays multiple roles in the viral cycle. During viral entry, remains associated with the capsid while most of the tegument is detached and participates in the capsid transport toward the host nucleus. Plays a role in the routing of the capsid at the nuclear pore complex and subsequent uncoating. Within the host nucleus, acts as a deneddylase and promotes the degradation of nuclear CRLs (cullin-RING ubiquitin ligases) and thereby stabilizes nuclear CRL substrates, while cytoplasmic CRLs remain unaffected. These modifications prevent host cell cycle S-phase progression and create a favorable environment allowing efficient viral genome replication. Participates later in the secondary envelopment of capsids. Indeed, plays a linker role for the association of the outer viral tegument to the capsids together with the inner tegument protein. The sequence is that of Large tegument protein deneddylase (U31) from Human herpesvirus 7 (strain JI) (HHV-7).